The primary structure comprises 211 residues: tRNA (guanine-N(7)-)-methyltransferase (211 aa).

Positions 40, 65, 92, and 118 each coordinate S-adenosyl-L-methionine. Aspartate 118 is a catalytic residue. The substrate site is built by lysine 122 and aspartate 154.

Belongs to the class I-like SAM-binding methyltransferase superfamily. TrmB family.

The catalysed reaction is guanosine(46) in tRNA + S-adenosyl-L-methionine = N(7)-methylguanosine(46) in tRNA + S-adenosyl-L-homocysteine. It functions in the pathway tRNA modification; N(7)-methylguanine-tRNA biosynthesis. Functionally, catalyzes the formation of N(7)-methylguanine at position 46 (m7G46) in tRNA. The protein is tRNA (guanine-N(7)-)-methyltransferase of Microcystis aeruginosa (strain NIES-843 / IAM M-2473).